The chain runs to 295 residues: UDP-N-acetylenolpyruvoylglucosamine reductase (295 aa).

Residues 26–189 (VGGRADILFK…VEAEFKGVNS (164 aa)) enclose the FAD-binding PCMH-type domain. The active site involves arginine 169. The active-site Proton donor is cysteine 218. Residue glutamate 288 is part of the active site.

Belongs to the MurB family. It depends on FAD as a cofactor.

Its subcellular location is the cytoplasm. It catalyses the reaction UDP-N-acetyl-alpha-D-muramate + NADP(+) = UDP-N-acetyl-3-O-(1-carboxyvinyl)-alpha-D-glucosamine + NADPH + H(+). The protein operates within cell wall biogenesis; peptidoglycan biosynthesis. Its function is as follows. Cell wall formation. This is UDP-N-acetylenolpyruvoylglucosamine reductase from Wolbachia sp. subsp. Drosophila simulans (strain wRi).